Consider the following 78-residue polypeptide: RNA-binding protein Hfq (78 aa).

A Sm domain is found at 10–69 (DPFLNALRKEHVPVSIYLVNGIKLQGNIESFDQYVVLLRNTVTQMVYKHAISTVVPARPV).

It belongs to the Hfq family. Homohexamer.

In terms of biological role, RNA chaperone that binds small regulatory RNA (sRNAs) and mRNAs to facilitate mRNA translational regulation in response to envelope stress, environmental stress and changes in metabolite concentrations. Also binds with high specificity to tRNAs. The sequence is that of RNA-binding protein Hfq from Paraburkholderia phymatum (strain DSM 17167 / CIP 108236 / LMG 21445 / STM815) (Burkholderia phymatum).